The following is a 294-amino-acid chain: Glycine--tRNA ligase alpha subunit (294 aa).

Belongs to the class-II aminoacyl-tRNA synthetase family. As to quaternary structure, tetramer of two alpha and two beta subunits.

The protein localises to the cytoplasm. It catalyses the reaction tRNA(Gly) + glycine + ATP = glycyl-tRNA(Gly) + AMP + diphosphate. This Oleidesulfovibrio alaskensis (strain ATCC BAA-1058 / DSM 17464 / G20) (Desulfovibrio alaskensis) protein is Glycine--tRNA ligase alpha subunit.